The following is a 188-amino-acid chain: Protein YOP1 (188 aa).

Topologically, residues 1-35 (MAEIAGNLQRILQSLDRQFAGNKYLQEFERKTGFP) are cytoplasmic. Residues 36–55 (KSYAIAGAGVAYLFIIFINV) form a helical membrane-spanning segment. Topologically, residues 56–57 (GG) are lumenal. The helical transmembrane segment at 58–78 (VGEILSNFLGFVLPCYYSLHA) threads the bilayer. Residues 79-88 (IKTTTTADDT) lie on the Cytoplasmic side of the membrane. The helical transmembrane segment at 89–105 (ELLTYWIVFAFFSVIEF) threads the bilayer. At 106–108 (WSK) the chain is on the lumenal side. Residues 109 to 127 (AILYWVPFYWFFKTIFLIF) traverse the membrane as a helical segment. The Cytoplasmic portion of the chain corresponds to 128–188 (IALPQLGGAS…TGAASHQSSD (61 aa)). The segment at 163 to 188 (ISSKMEQAAKGASARATGAASHQSSD) is disordered. Residues 170-188 (AAKGASARATGAASHQSSD) show a composition bias toward low complexity.

Belongs to the DP1 family. In terms of assembly, oligomer.

The protein localises to the endoplasmic reticulum membrane. It localises to the golgi apparatus membrane. In terms of biological role, required to generate and maintain the structure of the tubular endoplasmic reticulum network and the vacuole. Induces high curvature in membranes and causes membrane tubule formation. Involved in membrane/vesicle trafficking. This Eremothecium gossypii (strain ATCC 10895 / CBS 109.51 / FGSC 9923 / NRRL Y-1056) (Yeast) protein is Protein YOP1 (YOP1).